Consider the following 392-residue polypeptide: Chorismate synthase (392 aa).

The NADP(+) site is built by arginine 39 and arginine 45. Residues 131 to 133 (RSS), 255 to 256 (NA), glycine 300, 315 to 319 (KPIPT), and arginine 341 contribute to the FMN site.

Belongs to the chorismate synthase family. In terms of assembly, homotetramer. FMNH2 is required as a cofactor.

It carries out the reaction 5-O-(1-carboxyvinyl)-3-phosphoshikimate = chorismate + phosphate. It functions in the pathway metabolic intermediate biosynthesis; chorismate biosynthesis; chorismate from D-erythrose 4-phosphate and phosphoenolpyruvate: step 7/7. Functionally, catalyzes the anti-1,4-elimination of the C-3 phosphate and the C-6 proR hydrogen from 5-enolpyruvylshikimate-3-phosphate (EPSP) to yield chorismate, which is the branch point compound that serves as the starting substrate for the three terminal pathways of aromatic amino acid biosynthesis. This reaction introduces a second double bond into the aromatic ring system. This chain is Chorismate synthase, found in Leuconostoc mesenteroides subsp. mesenteroides (strain ATCC 8293 / DSM 20343 / BCRC 11652 / CCM 1803 / JCM 6124 / NCDO 523 / NBRC 100496 / NCIMB 8023 / NCTC 12954 / NRRL B-1118 / 37Y).